A 405-amino-acid chain; its full sequence is Imidazolonepropionase (405 aa).

His-72 and His-74 together coordinate Fe(3+). Residues His-72 and His-74 each coordinate Zn(2+). 4-imidazolone-5-propanoate is bound by residues Arg-81, Tyr-144, and His-177. Tyr-144 provides a ligand contact to N-formimidoyl-L-glutamate. His-242 contacts Fe(3+). His-242 contributes to the Zn(2+) binding site. Gln-245 is a binding site for 4-imidazolone-5-propanoate. Asp-317 is a binding site for Fe(3+). Asp-317 lines the Zn(2+) pocket. Residues Asn-319 and Gly-321 each contribute to the N-formimidoyl-L-glutamate site. Thr-322 lines the 4-imidazolone-5-propanoate pocket.

The protein belongs to the metallo-dependent hydrolases superfamily. HutI family. Zn(2+) serves as cofactor. Fe(3+) is required as a cofactor.

The protein localises to the cytoplasm. The enzyme catalyses 4-imidazolone-5-propanoate + H2O = N-formimidoyl-L-glutamate. The protein operates within amino-acid degradation; L-histidine degradation into L-glutamate; N-formimidoyl-L-glutamate from L-histidine: step 3/3. In terms of biological role, catalyzes the hydrolytic cleavage of the carbon-nitrogen bond in imidazolone-5-propanoate to yield N-formimidoyl-L-glutamate. It is the third step in the universal histidine degradation pathway. The sequence is that of Imidazolonepropionase from Klebsiella pneumoniae (strain 342).